Consider the following 533-residue polypeptide: Di/tripeptide-binding protein 4 (533 aa).

The first 25 residues, methionine 1 to alanine 25, serve as a signal peptide directing secretion.

It belongs to the bacterial solute-binding protein 5 family. The complex is composed of two ATP-binding proteins (DppD and DppF), two transmembrane proteins (DppB and DppC) and a solute-binding protein (DppA4). Five orthologous SBPs (DppA1-A5) are present in P.aeruginosa, which increases the substrate specificity of the DppBCDF transporter.

Its function is as follows. Part of the ABC transporter DppABCDF involved in the uptake of various di/tripeptides. Prefers dipeptides with acidic residues at the C-terminal end. Efficiently uses tripeptides. This Pseudomonas aeruginosa (strain UCBPP-PA14) protein is Di/tripeptide-binding protein 4.